A 200-amino-acid polypeptide reads, in one-letter code: Type 1 fimbriae regulatory protein FimB (200 aa).

The Tyr recombinase domain occupies Lys8–Asp189. Residues Arg47, Lys72, His141, Arg144, and His167 contribute to the active site. Residue Tyr176 is the O-(3'-phospho-DNA)-tyrosine intermediate of the active site.

Belongs to the 'phage' integrase family.

In terms of biological role, fimB is one of the 2 regulatory proteins which control the phase variation of type 1 fimbriae in E.coli. These proteins mediate the periodic inversion of a 300bp DNA segment that harbors the promoter for the fimbrial structural gene, fimA. FimB switches fimA on. The chain is Type 1 fimbriae regulatory protein FimB (fimB) from Escherichia coli O157:H7.